Reading from the N-terminus, the 427-residue chain is Glutamate-1-semialdehyde 2,1-aminomutase (427 aa).

Residue lysine 265 is modified to N6-(pyridoxal phosphate)lysine.

Belongs to the class-III pyridoxal-phosphate-dependent aminotransferase family. HemL subfamily. As to quaternary structure, homodimer. Requires pyridoxal 5'-phosphate as cofactor.

The protein resides in the cytoplasm. The enzyme catalyses (S)-4-amino-5-oxopentanoate = 5-aminolevulinate. The protein operates within porphyrin-containing compound metabolism; protoporphyrin-IX biosynthesis; 5-aminolevulinate from L-glutamyl-tRNA(Glu): step 2/2. This is Glutamate-1-semialdehyde 2,1-aminomutase from Pseudomonas paraeruginosa (strain DSM 24068 / PA7) (Pseudomonas aeruginosa (strain PA7)).